Reading from the N-terminus, the 453-residue chain is Bifunctional protein GlmU (453 aa).

The segment at Met1 to Lys225 is pyrophosphorylase. Residues Leu6–Gly9, Lys20, Gln71, Gly76–Thr77, Tyr98–Asp100, Gly135, Glu150, Asn165, and Asn223 contribute to the UDP-N-acetyl-alpha-D-glucosamine site. Asp100 is a binding site for Mg(2+). Asn223 contacts Mg(2+). The tract at residues Ala226–Asp246 is linker. Residues Gly247–Ser453 form an N-acetyltransferase region. UDP-N-acetyl-alpha-D-glucosamine contacts are provided by Arg329 and Lys347. His359 functions as the Proton acceptor in the catalytic mechanism. 2 residues coordinate UDP-N-acetyl-alpha-D-glucosamine: Tyr362 and Asn373. Acetyl-CoA is bound by residues Ala376, Asn382–Tyr383, Ser401, and Ala419.

In the N-terminal section; belongs to the N-acetylglucosamine-1-phosphate uridyltransferase family. It in the C-terminal section; belongs to the transferase hexapeptide repeat family. In terms of assembly, homotrimer. It depends on Mg(2+) as a cofactor.

It localises to the cytoplasm. The catalysed reaction is alpha-D-glucosamine 1-phosphate + acetyl-CoA = N-acetyl-alpha-D-glucosamine 1-phosphate + CoA + H(+). It catalyses the reaction N-acetyl-alpha-D-glucosamine 1-phosphate + UTP + H(+) = UDP-N-acetyl-alpha-D-glucosamine + diphosphate. Its pathway is nucleotide-sugar biosynthesis; UDP-N-acetyl-alpha-D-glucosamine biosynthesis; N-acetyl-alpha-D-glucosamine 1-phosphate from alpha-D-glucosamine 6-phosphate (route II): step 2/2. The protein operates within nucleotide-sugar biosynthesis; UDP-N-acetyl-alpha-D-glucosamine biosynthesis; UDP-N-acetyl-alpha-D-glucosamine from N-acetyl-alpha-D-glucosamine 1-phosphate: step 1/1. It functions in the pathway bacterial outer membrane biogenesis; LPS lipid A biosynthesis. Functionally, catalyzes the last two sequential reactions in the de novo biosynthetic pathway for UDP-N-acetylglucosamine (UDP-GlcNAc). The C-terminal domain catalyzes the transfer of acetyl group from acetyl coenzyme A to glucosamine-1-phosphate (GlcN-1-P) to produce N-acetylglucosamine-1-phosphate (GlcNAc-1-P), which is converted into UDP-GlcNAc by the transfer of uridine 5-monophosphate (from uridine 5-triphosphate), a reaction catalyzed by the N-terminal domain. The protein is Bifunctional protein GlmU of Burkholderia thailandensis (strain ATCC 700388 / DSM 13276 / CCUG 48851 / CIP 106301 / E264).